A 306-amino-acid chain; its full sequence is Curved DNA-binding protein (306 aa).

One can recognise a J domain in the interval 5–69; the sequence is DYYAIMGVKP…QRRAEYDQLW (65 aa).

It localises to the cytoplasm. Its subcellular location is the nucleoid. Its function is as follows. DNA-binding protein that preferentially recognizes a curved DNA sequence. It is probably a functional analog of DnaJ; displays overlapping activities with DnaJ, but functions under different conditions, probably acting as a molecular chaperone in an adaptive response to environmental stresses other than heat shock. Lacks autonomous chaperone activity; binds native substrates and targets them for recognition by DnaK. Its activity is inhibited by the binding of CbpM. This chain is Curved DNA-binding protein, found in Citrobacter koseri (strain ATCC BAA-895 / CDC 4225-83 / SGSC4696).